The sequence spans 149 residues: IQ domain-containing protein F5 (149 aa).

2 consecutive IQ domains span residues 12 to 41 (ENKA…RAWI) and 68 to 97 (QEWA…AVRI).

This Bos taurus (Bovine) protein is IQ domain-containing protein F5 (IQCF5).